Reading from the N-terminus, the 156-residue chain is Ribosomal RNA large subunit methyltransferase H (156 aa).

S-adenosyl-L-methionine-binding positions include Leu-73, Gly-104, and 123-128 (LSPLTL).

Belongs to the RNA methyltransferase RlmH family. Homodimer.

The protein resides in the cytoplasm. The catalysed reaction is pseudouridine(1915) in 23S rRNA + S-adenosyl-L-methionine = N(3)-methylpseudouridine(1915) in 23S rRNA + S-adenosyl-L-homocysteine + H(+). In terms of biological role, specifically methylates the pseudouridine at position 1915 (m3Psi1915) in 23S rRNA. This Edwardsiella ictaluri (strain 93-146) protein is Ribosomal RNA large subunit methyltransferase H.